The sequence spans 389 residues: Chalcone synthase 4 (389 aa).

Residue C164 is part of the active site.

This sequence belongs to the thiolase-like superfamily. Chalcone/stilbene synthases family.

It catalyses the reaction (E)-4-coumaroyl-CoA + 3 malonyl-CoA + 3 H(+) = 2',4,4',6'-tetrahydroxychalcone + 3 CO2 + 4 CoA. The protein operates within secondary metabolite biosynthesis; flavonoid biosynthesis. The primary product of this enzyme is 4,2',4',6'-tetrahydroxychalcone (also termed naringenin-chalcone or chalcone) which can under specific conditions spontaneously isomerize into naringenin. This is Chalcone synthase 4 (CHS4) from Pisum sativum (Garden pea).